The following is a 260-amino-acid chain: uncharacterized protein (260 aa).

The region spanning 8-166 is the PNPLA domain; the sequence is LALGSGGARG…VDRIPVSVVK (159 aa). The GXSXG motif lies at 39-43; it reads GSSMG. Catalysis depends on Ser41, which acts as the Nucleophile. The Proton acceptor role is filled by Asp153. The DGA/G signature appears at 153-155; that stretch reads DGA.

It belongs to the NTE family.

This is an uncharacterized protein from Bacillus subtilis (strain 168).